The following is a 514-amino-acid chain: ATP synthase subunit alpha (514 aa).

170-177 (GDRQIGKT) lines the ATP pocket.

It belongs to the ATPase alpha/beta chains family. In terms of assembly, F-type ATPases have 2 components, CF(1) - the catalytic core - and CF(0) - the membrane proton channel. CF(1) has five subunits: alpha(3), beta(3), gamma(1), delta(1), epsilon(1). CF(0) has three main subunits: a(1), b(2) and c(9-12). The alpha and beta chains form an alternating ring which encloses part of the gamma chain. CF(1) is attached to CF(0) by a central stalk formed by the gamma and epsilon chains, while a peripheral stalk is formed by the delta and b chains.

The protein resides in the cell inner membrane. It carries out the reaction ATP + H2O + 4 H(+)(in) = ADP + phosphate + 5 H(+)(out). Functionally, produces ATP from ADP in the presence of a proton gradient across the membrane. The alpha chain is a regulatory subunit. This Pseudomonas putida (strain ATCC 700007 / DSM 6899 / JCM 31910 / BCRC 17059 / LMG 24140 / F1) protein is ATP synthase subunit alpha.